A 189-amino-acid polypeptide reads, in one-letter code: Small ribosomal subunit protein uS4 (189 aa).

The S4 RNA-binding domain maps to 107–178 (RRLQTQVFKL…AGRVKRKNQG (72 aa)). The segment at 160–189 (HNSPYGGGRAGRVKRKNQGKGGEEGAEEEE) is disordered.

This sequence belongs to the universal ribosomal protein uS4 family. As to quaternary structure, component of the small ribosomal subunit. Mature ribosomes consist of a small (40S) and a large (60S) subunit. The 40S subunit contains about 32 different proteins and 1 molecule of RNA (18S). The 60S subunit contains 45 different proteins and 3 molecules of RNA (25S, 5.8S and 5S).

The protein resides in the cytoplasm. In terms of biological role, component of the ribosome, a large ribonucleoprotein complex responsible for the synthesis of proteins in the cell. The small ribosomal subunit (SSU) binds messenger RNAs (mRNAs) and translates the encoded message by selecting cognate aminoacyl-transfer RNA (tRNA) molecules. The large subunit (LSU) contains the ribosomal catalytic site termed the peptidyl transferase center (PTC), which catalyzes the formation of peptide bonds, thereby polymerizing the amino acids delivered by tRNAs into a polypeptide chain. The nascent polypeptides leave the ribosome through a tunnel in the LSU and interact with protein factors that function in enzymatic processing, targeting, and the membrane insertion of nascent chains at the exit of the ribosomal tunnel. RPS9B is involved in nucleolar processing of pre-18S ribosomal RNA and ribosome assembly. The protein is Small ribosomal subunit protein uS4 (RPS9B) of Candida albicans (strain SC5314 / ATCC MYA-2876) (Yeast).